A 515-amino-acid chain; its full sequence is Cytochrome P450 monooxygenase paxP (515 aa).

The chain crosses the membrane as a helical span at residues 20 to 36 (SLLWKLGVFAVLVYFLL). Residue Cys456 coordinates heme.

It belongs to the cytochrome P450 family. It depends on heme as a cofactor.

It localises to the membrane. The protein operates within secondary metabolite biosynthesis. In terms of biological role, cytochrome P450 monooxygenase; part of the ATM2 gene cluster that mediates the biosynthesis of paxilline, a mycotoxin that acts as an inhibitor of mammalian maxi-K channels. PaxG, the geranylgeranyl diphosphate (GGPP) synthase is proposed to catalyze the first step in paxilline biosynthesis. Condensation of indole-3-glycerol phosphate with GGPP by paxC then forms 3-geranylgeranylindole (3-GGI), followed by epoxidation and cyclization of this intermediate (by paxM and paxB) to form paspaline. Paspaline is subsequently converted to 13-desoxypaxilline by paxP, the latter being then converted to paxilline by paxQ. Finally paxilline can be mono- and di-prenylated by paxD. PaxP can also utilized beta-paxitriol and alpha-PC-M6 as substrates converting them to paxilline. The chain is Cytochrome P450 monooxygenase paxP from Penicillium paxilli.